Here is a 715-residue protein sequence, read N- to C-terminus: Methionine--tRNA ligase (715 aa).

The short motif at 17–27 (PYANGPIHLGH) is the 'HIGH' region element. Cys-148, Cys-151, Cys-161, and Cys-164 together coordinate Zn(2+). Positions 359–363 (KMSKS) match the 'KMSKS' region motif. Residue Lys-362 coordinates ATP. Residues 614–715 (DLSKVELRVG…KDAKPGDRLK (102 aa)) form the tRNA-binding domain.

The protein belongs to the class-I aminoacyl-tRNA synthetase family. MetG type 1 subfamily. In terms of assembly, homodimer. Requires Zn(2+) as cofactor.

Its subcellular location is the cytoplasm. The catalysed reaction is tRNA(Met) + L-methionine + ATP = L-methionyl-tRNA(Met) + AMP + diphosphate. In terms of biological role, is required not only for elongation of protein synthesis but also for the initiation of all mRNA translation through initiator tRNA(fMet) aminoacylation. This is Methionine--tRNA ligase from Leptospira interrogans serogroup Icterohaemorrhagiae serovar copenhageni (strain Fiocruz L1-130).